A 142-amino-acid chain; its full sequence is Large ribosomal subunit protein uL13 (142 aa).

Belongs to the universal ribosomal protein uL13 family. Part of the 50S ribosomal subunit.

Its function is as follows. This protein is one of the early assembly proteins of the 50S ribosomal subunit, although it is not seen to bind rRNA by itself. It is important during the early stages of 50S assembly. This chain is Large ribosomal subunit protein uL13, found in Chromohalobacter salexigens (strain ATCC BAA-138 / DSM 3043 / CIP 106854 / NCIMB 13768 / 1H11).